The chain runs to 220 residues: Chaperone protein TorD (220 aa).

This sequence belongs to the TorD/DmsD family. TorD subfamily.

It localises to the cytoplasm. Its function is as follows. Involved in the biogenesis of TorA. Acts on TorA before the insertion of the molybdenum cofactor and, as a result, probably favors a conformation of the apoenzyme that is competent for acquiring the cofactor. The protein is Chaperone protein TorD of Vibrio cholerae serotype O1 (strain ATCC 39315 / El Tor Inaba N16961).